A 294-amino-acid chain; its full sequence is Taste receptor type 2 member 143 (294 aa).

Residues 1-7 (MPSTPTL) are Extracellular-facing. The helical transmembrane segment at 8–28 (IFIVIFFLVSVASMLQNGFMI) threads the bilayer. The Cytoplasmic segment spans residues 29 to 43 (IVLGREWMRNRALPA). Residues 44–64 (VDMIVASLASSRFCLHGIAIL) traverse the membrane as a helical segment. The Extracellular segment spans residues 65 to 80 (NNFLASFDFCYQANFV). The helical transmembrane segment at 81 to 101 (GILWDFINTLILWLTAWLAIF) threads the bilayer. The Cytoplasmic segment spans residues 102–128 (YCVKISSFSHPVLFWLKWRISQLVPRL). Residues 129-149 (LLVSLIMGGLSAIISATGNII) traverse the membrane as a helical segment. Residues 150-180 (ANQMIISQGFHGNCTFGHMSLDFYRYYYLSH) are Extracellular-facing. N-linked (GlcNAc...) asparagine glycosylation is present at N162. The helical transmembrane segment at 181–201 (AVLMWFTPFFLFLVSIIFLMF) threads the bilayer. The Cytoplasmic portion of the chain corresponds to 202-227 (SLYRHVEKMRGHRPGPWDPRTQAHTM). Residues 228–248 (ALKSLTVFITFYILFFLALII) form a helical membrane-spanning segment. Over 249-260 (SSTKSKTMHSYW) the chain is Extracellular. The chain crosses the membrane as a helical span at residues 261–281 (YWVREIIIYTGIFLNSIILVL). Topologically, residues 282–294 (SNPKLRKALKMRF) are cytoplasmic.

The protein belongs to the G-protein coupled receptor T2R family.

It localises to the membrane. Functionally, putative taste receptor which may play a role in the perception of bitterness. The sequence is that of Taste receptor type 2 member 143 from Rattus norvegicus (Rat).